The chain runs to 76 residues: UPF0235 protein MMAR_2910 (76 aa).

Belongs to the UPF0235 family.

This is UPF0235 protein MMAR_2910 from Mycobacterium marinum (strain ATCC BAA-535 / M).